The following is a 194-amino-acid chain: Peptidyl-tRNA hydrolase (194 aa).

Tyr17 provides a ligand contact to tRNA. His22 functions as the Proton acceptor in the catalytic mechanism. TRNA contacts are provided by Tyr68, Asn70, and Asn116.

It belongs to the PTH family. Monomer.

It is found in the cytoplasm. The enzyme catalyses an N-acyl-L-alpha-aminoacyl-tRNA + H2O = an N-acyl-L-amino acid + a tRNA + H(+). Its function is as follows. Hydrolyzes ribosome-free peptidyl-tRNAs (with 1 or more amino acids incorporated), which drop off the ribosome during protein synthesis, or as a result of ribosome stalling. Catalyzes the release of premature peptidyl moieties from peptidyl-tRNA molecules trapped in stalled 50S ribosomal subunits, and thus maintains levels of free tRNAs and 50S ribosomes. The chain is Peptidyl-tRNA hydrolase from Pseudomonas savastanoi pv. phaseolicola (strain 1448A / Race 6) (Pseudomonas syringae pv. phaseolicola (strain 1448A / Race 6)).